We begin with the raw amino-acid sequence, 247 residues long: Putative methyltransferase YqeM (247 aa).

Belongs to the methyltransferase superfamily.

In terms of biological role, may be a S-adenosyl-L-methionine (SAM)-dependent methyltransferase. The polypeptide is Putative methyltransferase YqeM (yqeM) (Bacillus subtilis (strain 168)).